Here is a 459-residue protein sequence, read N- to C-terminus: Argininosuccinate lyase (459 aa).

Belongs to the lyase 1 family. Argininosuccinate lyase subfamily.

The protein localises to the cytoplasm. The catalysed reaction is 2-(N(omega)-L-arginino)succinate = fumarate + L-arginine. Its pathway is amino-acid biosynthesis; L-arginine biosynthesis; L-arginine from L-ornithine and carbamoyl phosphate: step 3/3. In Bacillus licheniformis (strain ATCC 14580 / DSM 13 / JCM 2505 / CCUG 7422 / NBRC 12200 / NCIMB 9375 / NCTC 10341 / NRRL NRS-1264 / Gibson 46), this protein is Argininosuccinate lyase.